The following is a 308-amino-acid chain: Ribonuclease HIII (308 aa).

The RNase H type-2 domain maps to 91 to 308 (KNVIGSDEVG…TEKALKMVKK (218 aa)). Residues Asp97, Glu98, and Asp202 each contribute to the a divalent metal cation site.

It belongs to the RNase HII family. RnhC subfamily. The cofactor is Mn(2+). Mg(2+) serves as cofactor.

The protein localises to the cytoplasm. It carries out the reaction Endonucleolytic cleavage to 5'-phosphomonoester.. Endonuclease that specifically degrades the RNA of RNA-DNA hybrids. The chain is Ribonuclease HIII from Listeria monocytogenes serotype 4b (strain F2365).